The primary structure comprises 253 residues: 5-oxoprolinase subunit A (253 aa).

The protein belongs to the LamB/PxpA family. As to quaternary structure, forms a complex composed of PxpA, PxpB and PxpC.

The enzyme catalyses 5-oxo-L-proline + ATP + 2 H2O = L-glutamate + ADP + phosphate + H(+). Functionally, catalyzes the cleavage of 5-oxoproline to form L-glutamate coupled to the hydrolysis of ATP to ADP and inorganic phosphate. The chain is 5-oxoprolinase subunit A from Bacillus cereus (strain 03BB102).